Reading from the N-terminus, the 239-residue chain is MKKTTRRTAGGRGGAGSHELYQRVKKKAGTIKASSRRWLERHLNDPYVHQSKADGYRSRAAYKLIEINERYKILKKGQKIIDLGAAPGGWCQVAARLVESKDYNPSVVGIDYLHMEPLPGVAILEMDFFHEDAPQELISTLGSKPDVVLSDMAAPTTGHRQTDHLRTIALCEAAVHFSISVLKPGGHFLTKTFQGGAEGNLLATLKQNFKKVHHVKPPASRAESVELYLLALQFKGKTD.

S-adenosyl-L-methionine is bound by residues G88, W90, D111, D127, and D151. K191 (proton acceptor) is an active-site residue.

The protein belongs to the class I-like SAM-binding methyltransferase superfamily. RNA methyltransferase RlmE family.

The protein localises to the cytoplasm. The enzyme catalyses uridine(2552) in 23S rRNA + S-adenosyl-L-methionine = 2'-O-methyluridine(2552) in 23S rRNA + S-adenosyl-L-homocysteine + H(+). Functionally, specifically methylates the uridine in position 2552 of 23S rRNA at the 2'-O position of the ribose in the fully assembled 50S ribosomal subunit. The polypeptide is Ribosomal RNA large subunit methyltransferase E (Bartonella bacilliformis (strain ATCC 35685 / KC583 / Herrer 020/F12,63)).